We begin with the raw amino-acid sequence, 281 residues long: ATP phosphoribosyltransferase (281 aa).

This sequence belongs to the ATP phosphoribosyltransferase family. Long subfamily. Mg(2+) serves as cofactor.

It is found in the cytoplasm. The catalysed reaction is 1-(5-phospho-beta-D-ribosyl)-ATP + diphosphate = 5-phospho-alpha-D-ribose 1-diphosphate + ATP. It participates in amino-acid biosynthesis; L-histidine biosynthesis; L-histidine from 5-phospho-alpha-D-ribose 1-diphosphate: step 1/9. With respect to regulation, feedback inhibited by histidine. In terms of biological role, catalyzes the condensation of ATP and 5-phosphoribose 1-diphosphate to form N'-(5'-phosphoribosyl)-ATP (PR-ATP). Has a crucial role in the pathway because the rate of histidine biosynthesis seems to be controlled primarily by regulation of HisG enzymatic activity. The sequence is that of ATP phosphoribosyltransferase from Corynebacterium glutamicum (strain R).